A 78-amino-acid chain; its full sequence is uncharacterized protein (78 aa).

This is an uncharacterized protein from Ureaplasma parvum serovar 3 (strain ATCC 700970).